A 577-amino-acid chain; its full sequence is Proline--tRNA ligase (577 aa).

Belongs to the class-II aminoacyl-tRNA synthetase family. ProS type 1 subfamily. As to quaternary structure, homodimer.

It localises to the cytoplasm. The enzyme catalyses tRNA(Pro) + L-proline + ATP = L-prolyl-tRNA(Pro) + AMP + diphosphate. Catalyzes the attachment of proline to tRNA(Pro) in a two-step reaction: proline is first activated by ATP to form Pro-AMP and then transferred to the acceptor end of tRNA(Pro). As ProRS can inadvertently accommodate and process non-cognate amino acids such as alanine and cysteine, to avoid such errors it has two additional distinct editing activities against alanine. One activity is designated as 'pretransfer' editing and involves the tRNA(Pro)-independent hydrolysis of activated Ala-AMP. The other activity is designated 'posttransfer' editing and involves deacylation of mischarged Ala-tRNA(Pro). The misacylated Cys-tRNA(Pro) is not edited by ProRS. The chain is Proline--tRNA ligase from Chlamydia abortus (strain DSM 27085 / S26/3) (Chlamydophila abortus).